A 491-amino-acid polypeptide reads, in one-letter code: Ketol-acid reductoisomerase (NADP(+)) (491 aa).

The KARI N-terminal Rossmann domain maps to 15-208; it reads AQLGKCRFMG…GGHRAGVLES (194 aa). NADP(+) is bound by residues 45–48, Arg-68, Arg-76, Ser-78, and 108–110; these read CGAQ and DKQ. His-132 is an active-site residue. Gly-158 lines the NADP(+) pocket. KARI C-terminal knotted domains lie at 209 to 344 and 345 to 484; these read SFVA…TAPQ and FEGK…MTDM. Residues Asp-217, Glu-221, Glu-389, and Glu-393 each contribute to the Mg(2+) site. Position 414 (Ser-414) interacts with substrate.

It belongs to the ketol-acid reductoisomerase family. The cofactor is Mg(2+).

It catalyses the reaction (2R)-2,3-dihydroxy-3-methylbutanoate + NADP(+) = (2S)-2-acetolactate + NADPH + H(+). The catalysed reaction is (2R,3R)-2,3-dihydroxy-3-methylpentanoate + NADP(+) = (S)-2-ethyl-2-hydroxy-3-oxobutanoate + NADPH + H(+). It functions in the pathway amino-acid biosynthesis; L-isoleucine biosynthesis; L-isoleucine from 2-oxobutanoate: step 2/4. The protein operates within amino-acid biosynthesis; L-valine biosynthesis; L-valine from pyruvate: step 2/4. Involved in the biosynthesis of branched-chain amino acids (BCAA). Catalyzes an alkyl-migration followed by a ketol-acid reduction of (S)-2-acetolactate (S2AL) to yield (R)-2,3-dihydroxy-isovalerate. In the isomerase reaction, S2AL is rearranged via a Mg-dependent methyl migration to produce 3-hydroxy-3-methyl-2-ketobutyrate (HMKB). In the reductase reaction, this 2-ketoacid undergoes a metal-dependent reduction by NADPH to yield (R)-2,3-dihydroxy-isovalerate. The protein is Ketol-acid reductoisomerase (NADP(+)) of Salmonella dublin (strain CT_02021853).